The sequence spans 444 residues: Glutamate--methylamine ligase (444 aa).

A GS beta-grasp domain is found at 14 to 97; sequence HHVKYVLAQF…LVCDGHVNGK (84 aa). The 342-residue stretch at 103 to 444 folds into the GS catalytic domain; that stretch reads TRVVLKQQIA…WEINRYVQFY (342 aa).

It belongs to the glutamine synthetase family. Type 3 subfamily. Mg(2+) is required as a cofactor.

The enzyme catalyses methylamine + L-glutamate + ATP = N(5)-methyl-L-glutamine + ADP + phosphate + H(+). It catalyses the reaction ethylamine + L-glutamate + ATP = N(5)-ethyl-L-glutamine + ADP + phosphate + H(+). With respect to regulation, formation of theanine is repressed by a high concentration of glutamic acid. Functionally, catalyzes the formation of N(5)-methyl-L-glutamine from glutamate and methylamine. In vitro, can also use ethylamine, hydroxylamine and ammonia, with 75%, 40% and 1% activity compared to methylamine, respectively. The chain is Glutamate--methylamine ligase from Methylovorus mays.